The chain runs to 792 residues: Endonuclease MutS2 (792 aa).

Position 335–342 (335–342 (GPNTGGKT)) interacts with ATP. Residues 717 to 792 (VDLRGLNLEE…GAGVTIVKLK (76 aa)) form the Smr domain.

This sequence belongs to the DNA mismatch repair MutS family. MutS2 subfamily. Homodimer. Binds to stalled ribosomes, contacting rRNA.

Endonuclease that is involved in the suppression of homologous recombination and thus may have a key role in the control of bacterial genetic diversity. Functionally, acts as a ribosome collision sensor, splitting the ribosome into its 2 subunits. Detects stalled/collided 70S ribosomes which it binds and splits by an ATP-hydrolysis driven conformational change. Acts upstream of the ribosome quality control system (RQC), a ribosome-associated complex that mediates the extraction of incompletely synthesized nascent chains from stalled ribosomes and their subsequent degradation. Probably generates substrates for RQC. The protein is Endonuclease MutS2 of Clostridioides difficile (strain 630) (Peptoclostridium difficile).